We begin with the raw amino-acid sequence, 382 residues long: D-galactonate dehydratase (382 aa).

Asp-183 lines the Mg(2+) pocket. His-185 serves as the catalytic Proton donor. Mg(2+) contacts are provided by Glu-209 and Glu-235. Catalysis depends on His-285, which acts as the Proton acceptor.

The protein belongs to the mandelate racemase/muconate lactonizing enzyme family. GalD subfamily. It depends on Mg(2+) as a cofactor.

The enzyme catalyses D-galactonate = 2-dehydro-3-deoxy-D-galactonate + H2O. It functions in the pathway carbohydrate acid metabolism; D-galactonate degradation; D-glyceraldehyde 3-phosphate and pyruvate from D-galactonate: step 1/3. In terms of biological role, catalyzes the dehydration of D-galactonate to 2-keto-3-deoxy-D-galactonate. This Xanthomonas campestris pv. campestris (strain 8004) protein is D-galactonate dehydratase.